A 186-amino-acid polypeptide reads, in one-letter code: ADP-ribosylation factor-like protein 8A (186 aa).

Residues 1–19 (MLALFNKLLDWFRALFWKE) constitute an intramembrane region (note=Mediates targeting to membranes). Residues 29 to 35 (QYSGKTT), 71 to 75 (DIGGQ), and 130 to 133 (NKRD) contribute to the GTP site.

This sequence belongs to the small GTPase superfamily. Arf family.

It is found in the late endosome membrane. The protein resides in the lysosome membrane. The protein localises to the cytoplasm. Its subcellular location is the cytoskeleton. It localises to the spindle. It is found in the cell projection. The protein resides in the axon. The protein localises to the synapse. Its function is as follows. Plays a role in lysosome motility. In neurons, mediates the anterograde axonal long-range transport of presynaptic lysosome-related vesicles required for presynaptic biogenesis and synaptic function. May play a role in chromosome segregation. The protein is ADP-ribosylation factor-like protein 8A (ARL8A) of Gallus gallus (Chicken).